The sequence spans 256 residues: GTP cyclohydrolase FolE2 (256 aa).

This sequence belongs to the GTP cyclohydrolase IV family.

The enzyme catalyses GTP + H2O = 7,8-dihydroneopterin 3'-triphosphate + formate + H(+). The protein operates within cofactor biosynthesis; 7,8-dihydroneopterin triphosphate biosynthesis; 7,8-dihydroneopterin triphosphate from GTP: step 1/1. Its function is as follows. Converts GTP to 7,8-dihydroneopterin triphosphate. The sequence is that of GTP cyclohydrolase FolE2 from Caldicellulosiruptor bescii (strain ATCC BAA-1888 / DSM 6725 / KCTC 15123 / Z-1320) (Anaerocellum thermophilum).